The chain runs to 221 residues: RNA pyrophosphohydrolase (221 aa).

The 144-residue stretch at 6-149 (GFRPNVGIVL…KRSVYALALT (144 aa)) folds into the Nudix hydrolase domain. Residues 38-59 (GGIDRGETPEQAMFRELHEEVG) carry the Nudix box motif.

The protein belongs to the Nudix hydrolase family. RppH subfamily. A divalent metal cation serves as cofactor.

Its function is as follows. Accelerates the degradation of transcripts by removing pyrophosphate from the 5'-end of triphosphorylated RNA, leading to a more labile monophosphorylated state that can stimulate subsequent ribonuclease cleavage. The sequence is that of RNA pyrophosphohydrolase from Verminephrobacter eiseniae (strain EF01-2).